We begin with the raw amino-acid sequence, 256 residues long: Type III pantothenate kinase (256 aa).

6–13 (DIGNTHIV) contacts ATP. 109 to 112 (GADR) contacts substrate. Asp111 functions as the Proton acceptor in the catalytic mechanism. Asp132 contributes to the K(+) binding site. Thr135 contacts ATP. Residue Thr186 coordinates substrate.

This sequence belongs to the type III pantothenate kinase family. As to quaternary structure, homodimer. It depends on NH4(+) as a cofactor. K(+) is required as a cofactor.

It is found in the cytoplasm. The enzyme catalyses (R)-pantothenate + ATP = (R)-4'-phosphopantothenate + ADP + H(+). The protein operates within cofactor biosynthesis; coenzyme A biosynthesis; CoA from (R)-pantothenate: step 1/5. In terms of biological role, catalyzes the phosphorylation of pantothenate (Pan), the first step in CoA biosynthesis. The protein is Type III pantothenate kinase of Fusobacterium nucleatum subsp. nucleatum (strain ATCC 25586 / DSM 15643 / BCRC 10681 / CIP 101130 / JCM 8532 / KCTC 2640 / LMG 13131 / VPI 4355).